A 111-amino-acid polypeptide reads, in one-letter code: Rho GDP-dissociation inhibitor 1 (111 aa).

Residues Lys-57 and Lys-60 each participate in a glycyl lysine isopeptide (Lys-Gly) (interchain with G-Cter in SUMO1); alternate cross-link. Residues Lys-57 and Lys-60 each participate in a glycyl lysine isopeptide (Lys-Gly) (interchain with G-Cter in SUMO2); alternate cross-link. An N6-acetyllysine; alternate modification is found at Lys-60. Lys-60 is subject to N6-succinyllysine; alternate.

It belongs to the Rho GDI family. Monomer. Interacts with FER. Interacts with PLXNB3. Forms a heterodimer with RAC1. Interacts with RHOA, the affinity is increased by three orders of magnitude when RHOA is prenylated. Interacts with PSMD10; the interaction increases ARHGDIA association with RHOA, leading to ARHGDIA-mediated inactivation of RHOA and ROCK and prolonged AKT activation. Interacts with KANK2; the interaction is direct and may regulate the interaction of ARHGDIA with RHOA, RAC1 and CDC42. Interacts with RHOC. Interacts with CDC42. Interacts with NGFR (via death domain); NGFR binding decreases the affinity for RHOA. The N-terminus is blocked.

The protein localises to the cytoplasm. Its function is as follows. Controls Rho proteins homeostasis. Regulates the GDP/GTP exchange reaction of the Rho proteins by inhibiting the dissociation of GDP from them, and the subsequent binding of GTP to them. Retains Rho proteins such as CDC42, RAC1 and RHOA in an inactive cytosolic pool, regulating their stability and protecting them from degradation. Actively involved in the recycling and distribution of activated Rho GTPases in the cell, mediates extraction from membranes of both inactive and activated molecules due its exceptionally high affinity for prenylated forms. Through the modulation of Rho proteins, may play a role in cell motility regulation. In glioma cells, inhibits cell migration and invasion by mediating the signals of SEMA5A and PLXNB3 that lead to inactivation of RAC1. The protein is Rho GDP-dissociation inhibitor 1 (ARHGDIA) of Cavia porcellus (Guinea pig).